Consider the following 706-residue polypeptide: Protein-glutamine gamma-glutamyltransferase 6 (706 aa).

Residues alanine 223, asparagine 226, and asparagine 228 each contribute to the Ca(2+) site. Residue cysteine 274 is part of the active site. 5 residues coordinate Ca(2+): aspartate 303, aspartate 305, asparagine 307, serine 309, and aspartate 327. Residues histidine 333 and aspartate 356 contribute to the active site. The Ca(2+) site is built by asparagine 396, threonine 417, glutamate 445, and glutamate 450.

It belongs to the transglutaminase superfamily. Transglutaminase family. Requires Ca(2+) as cofactor.

It localises to the cytoplasm. The enzyme catalyses L-glutaminyl-[protein] + L-lysyl-[protein] = [protein]-L-lysyl-N(6)-5-L-glutamyl-[protein] + NH4(+). In terms of biological role, catalyzes the cross-linking of proteins and the conjugation of polyamines to proteins. The polypeptide is Protein-glutamine gamma-glutamyltransferase 6 (TGM6) (Homo sapiens (Human)).